The chain runs to 31 residues: Glucagon-3 (31 aa).

It belongs to the glucagon family.

It localises to the secreted. Functionally, glucagon plays a key role in glucose metabolism and homeostasis. Regulates blood glucose by increasing gluconeogenesis and decreasing glycolysis. The sequence is that of Glucagon-3 from Huso dauricus (Kaluga sturgeon).